Consider the following 457-residue polypeptide: Secreted effector kinase SteC (457 aa).

Position 256 (Lys256) interacts with ATP.

Belongs to the protein kinase superfamily. Post-translationally, autophosphorylated.

It is found in the secreted. Its subcellular location is the host cytoplasm. In terms of biological role, effector proteins function to alter host cell physiology and promote bacterial survival in host tissues. This protein is a kinase, which is required for SPI-2 T3SS-dependent F-actin meshwork formation in infected host cells. This Salmonella typhimurium (strain LT2 / SGSC1412 / ATCC 700720) protein is Secreted effector kinase SteC (steC).